The chain runs to 93 residues: Small ribosomal subunit protein uS19 (93 aa).

It belongs to the universal ribosomal protein uS19 family.

Its function is as follows. Protein S19 forms a complex with S13 that binds strongly to the 16S ribosomal RNA. This chain is Small ribosomal subunit protein uS19, found in Oenococcus oeni (strain ATCC BAA-331 / PSU-1).